A 196-amino-acid chain; its full sequence is Putative archaetidylserine decarboxylase proenzyme (196 aa).

The Schiff-base intermediate with substrate; via pyruvic acid role is filled by S164. S164 carries the pyruvic acid (Ser); by autocatalysis modification.

The protein belongs to the phosphatidylserine decarboxylase family. PSD-A subfamily. As to quaternary structure, heterodimer of a large membrane-associated beta subunit and a small pyruvoyl-containing alpha subunit. Pyruvate serves as cofactor. Is synthesized initially as an inactive proenzyme. Formation of the active enzyme involves a self-maturation process in which the active site pyruvoyl group is generated from an internal serine residue via an autocatalytic post-translational modification. Two non-identical subunits are generated from the proenzyme in this reaction, and the pyruvate is formed at the N-terminus of the alpha chain, which is derived from the carboxyl end of the proenzyme. The post-translation cleavage follows an unusual pathway, termed non-hydrolytic serinolysis, in which the side chain hydroxyl group of the serine supplies its oxygen atom to form the C-terminus of the beta chain, while the remainder of the serine residue undergoes an oxidative deamination to produce ammonia and the pyruvoyl prosthetic group on the alpha chain.

The protein localises to the cell membrane. The enzyme catalyses archaetidylserine + H(+) = archaetidylethanolamine + CO2. In terms of biological role, catalyzes the formation of archaetidylethanolamine (PtdEtn) from archaetidylserine (PtdSer). This is Putative archaetidylserine decarboxylase proenzyme from Halobacterium salinarum (strain ATCC 700922 / JCM 11081 / NRC-1) (Halobacterium halobium).